The following is a 109-amino-acid chain: Small ribosomal subunit protein uS17 (109 aa).

Belongs to the universal ribosomal protein uS17 family. As to quaternary structure, part of the 30S ribosomal subunit.

Its function is as follows. One of the primary rRNA binding proteins, it binds specifically to the 5'-end of 16S ribosomal RNA. The chain is Small ribosomal subunit protein uS17 from Methanococcus maripaludis (strain DSM 14266 / JCM 13030 / NBRC 101832 / S2 / LL).